Consider the following 87-residue polypeptide: Phosphoribosyl-ATP pyrophosphatase (87 aa).

It belongs to the PRA-PH family.

Its subcellular location is the cytoplasm. It carries out the reaction 1-(5-phospho-beta-D-ribosyl)-ATP + H2O = 1-(5-phospho-beta-D-ribosyl)-5'-AMP + diphosphate + H(+). Its pathway is amino-acid biosynthesis; L-histidine biosynthesis; L-histidine from 5-phospho-alpha-D-ribose 1-diphosphate: step 2/9. This is Phosphoribosyl-ATP pyrophosphatase from Bifidobacterium adolescentis (strain ATCC 15703 / DSM 20083 / NCTC 11814 / E194a).